We begin with the raw amino-acid sequence, 432 residues long: Adenylosuccinate synthetase (432 aa).

Residues 13 to 19 (GDEGKGK) and 41 to 43 (GHT) each bind GTP. Catalysis depends on aspartate 14, which acts as the Proton acceptor. Mg(2+) is bound by residues aspartate 14 and glycine 41. IMP-binding positions include 14 to 17 (DEGK), 39 to 42 (NAGH), threonine 130, arginine 144, glutamine 225, threonine 240, and arginine 304. Catalysis depends on histidine 42, which acts as the Proton donor. 300 to 306 (ATTGRRR) provides a ligand contact to substrate. Residues arginine 306, 332–334 (KLD), and 415–417 (STG) each bind GTP.

Belongs to the adenylosuccinate synthetase family. Homodimer. Requires Mg(2+) as cofactor.

The protein localises to the cytoplasm. The enzyme catalyses IMP + L-aspartate + GTP = N(6)-(1,2-dicarboxyethyl)-AMP + GDP + phosphate + 2 H(+). Its pathway is purine metabolism; AMP biosynthesis via de novo pathway; AMP from IMP: step 1/2. Plays an important role in the de novo pathway of purine nucleotide biosynthesis. Catalyzes the first committed step in the biosynthesis of AMP from IMP. The protein is Adenylosuccinate synthetase of Salmonella paratyphi C (strain RKS4594).